Reading from the N-terminus, the 111-residue chain is Phosphoribosyl-ATP pyrophosphatase (111 aa).

Belongs to the PRA-PH family.

The protein localises to the cytoplasm. The catalysed reaction is 1-(5-phospho-beta-D-ribosyl)-ATP + H2O = 1-(5-phospho-beta-D-ribosyl)-5'-AMP + diphosphate + H(+). It functions in the pathway amino-acid biosynthesis; L-histidine biosynthesis; L-histidine from 5-phospho-alpha-D-ribose 1-diphosphate: step 2/9. The sequence is that of Phosphoribosyl-ATP pyrophosphatase from Ectopseudomonas mendocina (strain ymp) (Pseudomonas mendocina).